Reading from the N-terminus, the 253-residue chain is Precorrin-4 C(11)-methyltransferase (253 aa).

This sequence belongs to the precorrin methyltransferase family.

It catalyses the reaction precorrin-4 + S-adenosyl-L-methionine = precorrin-5 + S-adenosyl-L-homocysteine. The protein operates within cofactor biosynthesis; adenosylcobalamin biosynthesis; cob(II)yrinate a,c-diamide from precorrin-2 (aerobic route): step 4/10. Functionally, catalyzes the methylation of C-11 in precorrin-4 to form precorrin-5. The polypeptide is Precorrin-4 C(11)-methyltransferase (cobM) (Sinorhizobium sp).